Reading from the N-terminus, the 124-residue chain is Small ribosomal subunit protein uS12 (124 aa).

The segment at 1 to 28 (MPTIQQLIRSERSKAKKKTKSPALKQCP) is disordered. At Asp-89 the chain carries 3-methylthioaspartic acid. Positions 101 to 124 (TLDAQGVKDRKQGRSKYGTKKPKE) are disordered. Over residues 113–124 (GRSKYGTKKPKE) the composition is skewed to basic residues.

The protein belongs to the universal ribosomal protein uS12 family. In terms of assembly, part of the 30S ribosomal subunit. Contacts proteins S8 and S17. May interact with IF1 in the 30S initiation complex.

Functionally, with S4 and S5 plays an important role in translational accuracy. Interacts with and stabilizes bases of the 16S rRNA that are involved in tRNA selection in the A site and with the mRNA backbone. Located at the interface of the 30S and 50S subunits, it traverses the body of the 30S subunit contacting proteins on the other side and probably holding the rRNA structure together. The combined cluster of proteins S8, S12 and S17 appears to hold together the shoulder and platform of the 30S subunit. The protein is Small ribosomal subunit protein uS12 of Crocosphaera subtropica (strain ATCC 51142 / BH68) (Cyanothece sp. (strain ATCC 51142)).